A 139-amino-acid polypeptide reads, in one-letter code: Transcription initiation factor IIA small chain homolog (139 aa).

Positions 113-139 (LSAQGPSKRVNRAHAAAAGDDEDDDSD) are disordered.

This sequence belongs to the TFIIA subunit 2 family.

Its subcellular location is the nucleus. This Caenorhabditis elegans protein is Transcription initiation factor IIA small chain homolog.